The sequence spans 939 residues: Tyrosine-protein kinase Shark (939 aa).

Residues tryptophan 10–leucine 106 enclose the SH2 1 domain. ANK repeat units lie at residues aspartate 153 to serine 185, phenylalanine 186 to isoleucine 218, and asparagine 220 to serine 252. One can recognise an SH2 2 domain in the interval tryptophan 288–valine 403. Disordered stretches follow at residues glutamate 410–histidine 446 and alanine 476–glycine 505. A compositionally biased stretch (polar residues) spans glutamate 496–glycine 505. A Protein kinase domain is found at leucine 662 to phenylalanine 921. Residues isoleucine 668 to valine 676 and lysine 698 each bind ATP. Aspartate 789 acts as the Proton acceptor in catalysis. Tyrosine 927 bears the Phosphotyrosine mark.

Belongs to the protein kinase superfamily. Tyr protein kinase family. In terms of assembly, interacts with drpr; this is required for the recruitment of drpr and glial cells to severed axons and for the phagocytosis of axonal debris by glial cells following axon injury. Gastrulation embryos show expression in ectodermal cells along the cephalic furrow and ventral midline. Proctodeum, stomodeum and their derived structures (foregut, atrium, pharynx, esophagus and hindgut) continue to show expression from stage 8-9 to late embryos. Other ectodermally derived structures (frontal sac, salivary gland and labium) and developing tracheal system also show expression.

It is found in the cytoplasm. It carries out the reaction L-tyrosyl-[protein] + ATP = O-phospho-L-tyrosyl-[protein] + ADP + H(+). In terms of biological role, following axon injury, required for recruitment of drpr and glial cells to severed axons and for glial clearance of severed axons from the central nervous system. Together with Src42a and drpr, promotes the migration of macrophages to sites of wounding as part of a signaling cascade where Scr42a detects production of hydrogen peroxide at wound sites which triggers phosphorylation of drpr and subsequent recruitment and activation of shark. May be involved in signal transduction on the apical surface of ectodermal epithelial cells, regulating their polarity during invagination. Crumbs (crb) may be the intracellular signal. The chain is Tyrosine-protein kinase Shark from Drosophila melanogaster (Fruit fly).